The following is a 406-amino-acid chain: L-carnitine CoA-transferase (406 aa).

CoA-binding residues include lysine 98 and arginine 105. The active-site Nucleophile is aspartate 170.

It belongs to the CoA-transferase III family. CaiB subfamily. As to quaternary structure, homodimer.

The protein resides in the cytoplasm. The enzyme catalyses crotonobetainyl-CoA + (R)-carnitine = crotonobetaine + (R)-carnitinyl-CoA. It catalyses the reaction 4-(trimethylamino)butanoyl-CoA + (R)-carnitine = (R)-carnitinyl-CoA + 4-(trimethylamino)butanoate. Its pathway is amine and polyamine metabolism; carnitine metabolism. Catalyzes the reversible transfer of the CoA moiety from gamma-butyrobetainyl-CoA to L-carnitine to generate L-carnitinyl-CoA and gamma-butyrobetaine. Is also able to catalyze the reversible transfer of the CoA moiety from gamma-butyrobetainyl-CoA or L-carnitinyl-CoA to crotonobetaine to generate crotonobetainyl-CoA. The sequence is that of L-carnitine CoA-transferase from Proteus mirabilis (strain HI4320).